The sequence spans 95 residues: Transcription and mRNA export factor ENY2-2 (95 aa).

The protein belongs to the ENY2 family. In terms of assembly, component of the nuclear pore complex (NPC)-associated TREX-2 complex (transcription and export complex 2). Component of the SAGA transcription coactivator-HAT complex. Within the SAGA complex, participates in a subcomplex of SAGA called the DUB module (deubiquitination module).

It is found in the nucleus. Its subcellular location is the nucleoplasm. In terms of biological role, involved in mRNA export coupled transcription activation by association with both the TREX-2 and the SAGA complexes. The transcription regulatory histone acetylation (HAT) complex SAGA is a multiprotein complex that activates transcription by remodeling chromatin and mediating histone acetylation and deubiquitination. Within the SAGA complex, participates in a subcomplex that specifically deubiquitinates histones. The SAGA complex is recruited to specific gene promoters by activators, where it is required for transcription. The TREX-2 complex functions in docking export-competent ribonucleoprotein particles (mRNPs) to the nuclear entrance of the nuclear pore complex (nuclear basket). TREX-2 participates in mRNA export and accurate chromatin positioning in the nucleus by tethering genes to the nuclear periphery. This chain is Transcription and mRNA export factor ENY2-2 (eny2-2), found in Salmo salar (Atlantic salmon).